We begin with the raw amino-acid sequence, 74 residues long: UPF0235 protein tsr1994 (74 aa).

It belongs to the UPF0235 family.

This is UPF0235 protein tsr1994 from Thermosynechococcus vestitus (strain NIES-2133 / IAM M-273 / BP-1).